Reading from the N-terminus, the 86-residue chain is Large ribosomal subunit protein eL20 (86 aa).

Belongs to the eukaryotic ribosomal protein eL20 family. In terms of assembly, part of the 50S ribosomal subunit. Binds 23S rRNA.

The polypeptide is Large ribosomal subunit protein eL20 (Metallosphaera sedula (strain ATCC 51363 / DSM 5348 / JCM 9185 / NBRC 15509 / TH2)).